The primary structure comprises 317 residues: Ferrochelatase (317 aa).

Fe cation is bound by residues His184 and Glu259.

Belongs to the ferrochelatase family.

Its subcellular location is the cytoplasm. It catalyses the reaction heme b + 2 H(+) = protoporphyrin IX + Fe(2+). Its pathway is porphyrin-containing compound metabolism; protoheme biosynthesis; protoheme from protoporphyrin-IX: step 1/1. Its function is as follows. Catalyzes the ferrous insertion into protoporphyrin IX. This chain is Ferrochelatase, found in Chlamydia muridarum (strain MoPn / Nigg).